Reading from the N-terminus, the 483-residue chain is Cobyric acid synthase (483 aa).

Residues 251–438 enclose the GATase cobBQ-type domain; sequence ALIVAVPMLP…LHGIFSADRF (188 aa). The active-site Nucleophile is the Cys333. The active site involves His430.

It belongs to the CobB/CobQ family. CobQ subfamily.

The protein operates within cofactor biosynthesis; adenosylcobalamin biosynthesis. Catalyzes amidations at positions B, D, E, and G on adenosylcobyrinic A,C-diamide. NH(2) groups are provided by glutamine, and one molecule of ATP is hydrogenolyzed for each amidation. In Brucella abortus (strain S19), this protein is Cobyric acid synthase.